A 132-amino-acid polypeptide reads, in one-letter code: Small ribosomal subunit protein uS11 (132 aa).

Residues 1-24 form a disordered region; that stretch reads MAAPKQAARKPRRRDRKSVPVGQA. A compositionally biased stretch (basic residues) spans 7 to 16; sequence AARKPRRRDR.

The protein belongs to the universal ribosomal protein uS11 family. In terms of assembly, part of the 30S ribosomal subunit. Interacts with proteins S7 and S18. Binds to IF-3.

Located on the platform of the 30S subunit, it bridges several disparate RNA helices of the 16S rRNA. Forms part of the Shine-Dalgarno cleft in the 70S ribosome. This chain is Small ribosomal subunit protein uS11, found in Bifidobacterium longum (strain DJO10A).